The primary structure comprises 343 residues: MEEIKLTEYSHGAGCGCKISPMLLDEILKTDISSTLYPQLLVGNEHKDDAAAYDLGNGTSVLSTTDFFMPIVDDAFTFGRIAATNALSDIYAMGGKPLMAISIFGWPIEKLSSEVARQVIDGGRAACEDAGIPLAGGHSIDSPEPIFGLAVTGIVDNKNLMKNSSATDDCYIFITKSIGIGILTTAQKQKKIEDGDIDVAIEAMATLNRAGAIFATLDSVLTMTDVTGFGLLGHLSEVCEASGISANIWFEKVPLLQNVEKYRAQGCIPGGSRKNFMSYGHKISQISDRQREILCDAQTSGGLLVFVKKSGLDEFYKSAKEFGLNLEPIGETTPRRKHVIEVL.

The active site involves C15. ATP is bound by residues K18 and 46–48; that span reads HKD. Residue D49 coordinates Mg(2+). ATP contacts are provided by residues D66, D89, and 137–139; that span reads GHS. D89 contacts Mg(2+). D225 contacts Mg(2+).

It belongs to the selenophosphate synthase 1 family. Class I subfamily. In terms of assembly, homodimer. Mg(2+) serves as cofactor.

The catalysed reaction is hydrogenselenide + ATP + H2O = selenophosphate + AMP + phosphate + 2 H(+). Synthesizes selenophosphate from selenide and ATP. This Sulfurimonas denitrificans (strain ATCC 33889 / DSM 1251) (Thiomicrospira denitrificans (strain ATCC 33889 / DSM 1251)) protein is Selenide, water dikinase.